The chain runs to 990 residues: Presequence protease, mitochondrial (990 aa).

The transit peptide at 1–56 directs the protein to the mitochondrion; that stretch reads MLRFQRTVPRVAIRRLANVYSEGAVLHGYKVRRAQEIPEMRMAAVELEHEMTGARH. A Zn(2+)-binding site is contributed by histidine 84. Catalysis depends on glutamate 87, which acts as the Proton acceptor. Zn(2+) is bound at residue histidine 88. Glutamate 160 is an active-site residue. Position 185 (glutamate 185) interacts with Zn(2+).

It belongs to the peptidase M16 family. PreP subfamily. Monomer and homodimer; homodimerization is induced by binding of the substrate. Requires Zn(2+) as cofactor.

It is found in the mitochondrion intermembrane space. The protein resides in the mitochondrion matrix. Degrades mitochondrial transit peptides after their cleavage in the intermembrane space or in the matrix, and presequence peptides; clearance of these peptides is required to keep the presequence processing machinery running. Preferentially cleaves the N-terminal side of paired basic amino acid residues. Also degrades other unstructured peptides. May function as an ATP-dependent peptidase as opposed to a metalloendopeptidase. This Eremothecium gossypii (strain ATCC 10895 / CBS 109.51 / FGSC 9923 / NRRL Y-1056) (Yeast) protein is Presequence protease, mitochondrial (CYM1).